Here is a 226-residue protein sequence, read N- to C-terminus: Ribonuclease 3 (226 aa).

Positions 6 to 128 (INRLQRKLGY…LIGGVFLDSN (123 aa)) constitute an RNase III domain. Residue E41 participates in Mg(2+) binding. D45 is a catalytic residue. Residues D114 and E117 each coordinate Mg(2+). Residue E117 is part of the active site. In terms of domain architecture, DRBM spans 155–225 (DPKTRLQEYL…AEQALKKLEL (71 aa)).

Belongs to the ribonuclease III family. Homodimer. Mg(2+) is required as a cofactor.

The protein resides in the cytoplasm. It catalyses the reaction Endonucleolytic cleavage to 5'-phosphomonoester.. In terms of biological role, digests double-stranded RNA. Involved in the processing of primary rRNA transcript to yield the immediate precursors to the large and small rRNAs (23S and 16S). Processes some mRNAs, and tRNAs when they are encoded in the rRNA operon. Processes pre-crRNA and tracrRNA of type II CRISPR loci if present in the organism. This chain is Ribonuclease 3, found in Salmonella typhi.